The primary structure comprises 154 residues: Small ribosomal subunit protein uS9 (154 aa).

A disordered region spans residues 135–154 (KESKKYGLKKARKAPQYSKR). Over residues 140–154 (YGLKKARKAPQYSKR) the composition is skewed to basic residues.

This sequence belongs to the universal ribosomal protein uS9 family.

The chain is Small ribosomal subunit protein uS9 from Salinispora arenicola (strain CNS-205).